A 623-amino-acid polypeptide reads, in one-letter code: Chaperone protein HtpG (623 aa).

Positions 1 to 336 (MVSKQQTMGF…ASDLPLNISR (336 aa)) are a; substrate-binding. A b region spans residues 337–550 (EILQDNKQVE…EQDMGLEMQR (214 aa)). A c region spans residues 551–623 (ILQAAGQQVP…NRVNRLLVSS (73 aa)).

The protein belongs to the heat shock protein 90 family. Homodimer.

It localises to the cytoplasm. Functionally, molecular chaperone. Has ATPase activity. This is Chaperone protein HtpG from Legionella pneumophila (strain Paris).